The following is a 219-amino-acid chain: Clathrin light chain (219 aa).

A disordered region spans residues 32-136; sequence AEITGGSASA…KKEELRQQSK (105 aa). The tract at residues 96–158 is involved in binding clathrin heavy chain; sequence PPPSREEPEK…SISKTKLASR (63 aa). The span at 99–136 shows a compositional bias: basic and acidic residues; it reads SREEPEKIRKWREEQKQRLEEKDIEEERKKEELRQQSK.

Belongs to the clathrin light chain family. Clathrin coats are formed from molecules containing 3 heavy chains and 3 light chains.

The protein localises to the cytoplasmic vesicle membrane. Its subcellular location is the membrane. The protein resides in the coated pit. Clathrin is the major protein of the polyhedral coat of coated pits and vesicles. The chain is Clathrin light chain (Clc) from Drosophila melanogaster (Fruit fly).